The chain runs to 476 residues: Glucose-1-phosphate adenylyltransferase (476 aa).

Residues tyrosine 114, glycine 179, 194-195 (EK), and serine 212 contribute to the alpha-D-glucose 1-phosphate site.

Belongs to the bacterial/plant glucose-1-phosphate adenylyltransferase family. Homotetramer.

The catalysed reaction is alpha-D-glucose 1-phosphate + ATP + H(+) = ADP-alpha-D-glucose + diphosphate. The protein operates within glycan biosynthesis; glycogen biosynthesis. Its function is as follows. Involved in the biosynthesis of ADP-glucose, a building block required for the elongation reactions to produce glycogen. Catalyzes the reaction between ATP and alpha-D-glucose 1-phosphate (G1P) to produce pyrophosphate and ADP-Glc. The polypeptide is Glucose-1-phosphate adenylyltransferase (Yersinia pestis bv. Antiqua (strain Antiqua)).